The sequence spans 299 residues: Transcription factor srbB (299 aa).

2 disordered regions span residues 1–33 and 81–204; these read MAYN…DPLS and ISGF…NAAK. A compositionally biased stretch (low complexity) spans 161–170; that stretch reads PVTSQATTSP. The span at 188 to 199 shows a compositional bias: polar residues; the sequence is RSLSTDSQTATG. The basic motif stretch occupies residues 203-216; the sequence is AKRAAHNIIEKRYR. The bHLH domain maps to 203-264; it reads AKRAAHNIIE…TNAIAYMQEL (62 aa). Positions 217 to 264 are helix-loop-helix motif; it reads TNMNAKFVALEKAMSGSGVQKPTKGGSGPASLKKSEILTNAIAYMQEL. Residues 254 to 281 are a coiled coil; it reads LTNAIAYMQELQDQNAALQKELALLKQN.

It localises to the nucleus. Functionally, key transcription factors critical for hypoxia adaptation and virulence. Plays a major role in regulation of heme biosynthesis and carbohydrate metabolism early in the response to hypoxia. The polypeptide is Transcription factor srbB (Aspergillus fumigatus (strain ATCC MYA-4609 / CBS 101355 / FGSC A1100 / Af293) (Neosartorya fumigata)).